An 819-amino-acid chain; its full sequence is DNA topoisomerase 4 subunit A (819 aa).

The 467-residue stretch at 30 to 496 (LPDIRDGLKP…QIIEIDTASL (467 aa)) folds into the Topo IIA-type catalytic domain. Tyr118 functions as the O-(5'-phospho-DNA)-tyrosine intermediate in the catalytic mechanism.

Belongs to the type II topoisomerase GyrA/ParC subunit family. ParC type 2 subfamily. As to quaternary structure, heterotetramer composed of ParC and ParE.

It localises to the cell membrane. It carries out the reaction ATP-dependent breakage, passage and rejoining of double-stranded DNA.. Topoisomerase IV is essential for chromosome segregation. It relaxes supercoiled DNA. Performs the decatenation events required during the replication of a circular DNA molecule. The chain is DNA topoisomerase 4 subunit A from Streptococcus pyogenes serotype M6 (strain ATCC BAA-946 / MGAS10394).